The primary structure comprises 273 residues: Large ribosomal subunit protein uL2cz/uL2cy (273 aa).

Disordered stretches follow at residues 1 to 25 (MAIH…VKSN) and 224 to 273 (NPVD…RRRK).

The protein belongs to the universal ribosomal protein uL2 family. In terms of assembly, part of the 50S ribosomal subunit.

The protein resides in the plastid. Its subcellular location is the chloroplast. The chain is Large ribosomal subunit protein uL2cz/uL2cy (rpl2-A) from Phalaenopsis aphrodite subsp. formosana (Moth orchid).